The following is an 82-amino-acid chain: Small ribosomal subunit protein uS17 (82 aa).

Belongs to the universal ribosomal protein uS17 family. In terms of assembly, part of the 30S ribosomal subunit.

Its function is as follows. One of the primary rRNA binding proteins, it binds specifically to the 5'-end of 16S ribosomal RNA. The chain is Small ribosomal subunit protein uS17 from Shewanella frigidimarina (strain NCIMB 400).